The following is a 483-amino-acid chain: Probable cytosol aminopeptidase (483 aa).

Positions 245 and 250 each coordinate Mn(2+). Lys257 is a catalytic residue. Residues Asp268, Asp327, and Glu329 each coordinate Mn(2+). Residue Arg331 is part of the active site.

It belongs to the peptidase M17 family. It depends on Mn(2+) as a cofactor.

Its subcellular location is the cytoplasm. The catalysed reaction is Release of an N-terminal amino acid, Xaa-|-Yaa-, in which Xaa is preferably Leu, but may be other amino acids including Pro although not Arg or Lys, and Yaa may be Pro. Amino acid amides and methyl esters are also readily hydrolyzed, but rates on arylamides are exceedingly low.. It carries out the reaction Release of an N-terminal amino acid, preferentially leucine, but not glutamic or aspartic acids.. Its function is as follows. Presumably involved in the processing and regular turnover of intracellular proteins. Catalyzes the removal of unsubstituted N-terminal amino acids from various peptides. The protein is Probable cytosol aminopeptidase of Wolinella succinogenes (strain ATCC 29543 / DSM 1740 / CCUG 13145 / JCM 31913 / LMG 7466 / NCTC 11488 / FDC 602W) (Vibrio succinogenes).